The primary structure comprises 92 residues: UPF0125 protein NMA1005 (92 aa).

This sequence belongs to the UPF0125 (RnfH) family.

The polypeptide is UPF0125 protein NMA1005 (Neisseria meningitidis serogroup A / serotype 4A (strain DSM 15465 / Z2491)).